A 785-amino-acid chain; its full sequence is Proprotein convertase subtilisin/kexin type 7 (785 aa).

Positions 1-37 (MPKGRQKVPHLDAPLGLPTCLWLELAGLFLLVPWVMG) are cleaved as a signal peptide. A propeptide spanning residues 38–141 (LAGTGGPDGQ…EQRLLRRAKR (104 aa)) is cleaved from the precursor. Topologically, residues 142 to 667 (SVHFNDPKYP…YTITPNTLKT (526 aa)) are extracellular. One can recognise a Peptidase S8 domain in the interval 153 to 473 (QWHLNNRRSP…FGLLNAWRLV (321 aa)). N-linked (GlcNAc...) asparagine glycosylation is found at Asn-167 and Asn-175. The active-site Charge relay system is Asp-187. A disordered region spans residues 197–219 (IAPNYSPEGSYDLNSNDPDPMPH). Residue His-228 is the Charge relay system of the active site. The N-linked (GlcNAc...) asparagine glycan is linked to Asn-241. Ser-406 (charge relay system) is an active-site residue. Residues 481 to 618 (SVPYLASYVS…QLTLYGSVWS (138 aa)) enclose the P/Homo B domain. N-linked (GlcNAc...) asparagine glycosylation occurs at Asn-511. A helical transmembrane segment spans residues 668-688 (LVLVGCFTVFWTVYYMLEVYL). Over 689–785 (SQRNVASNQV…VPHGKEEQIC (97 aa)) the chain is Cytoplasmic. The disordered stretch occupies residues 700–751 (RSGPCHWPHRSRKAKEEGTELESVPLCSSKDPDEVETESRGPPTTSDLLAPD).

It belongs to the peptidase S8 family. Requires Ca(2+) as cofactor. Post-translationally, cysteine residues in the cytoplasmic tail are probably palmitoylated. N-glycosylated. As to expression, expressed in spleen, thymus, prostate, testis, ovary, small intestine, colon and peripheral blood leukocyte.

It is found in the golgi apparatus. The protein resides in the trans-Golgi network membrane. With respect to regulation, inhibited by zinc and copper. In terms of biological role, serine endoprotease that processes various proproteins by cleavage at paired basic amino acids, recognizing the RXXX[KR]R consensus motif. Likely functions in the constitutive secretory pathway. The chain is Proprotein convertase subtilisin/kexin type 7 (PCSK7) from Homo sapiens (Human).